The chain runs to 157 residues: Protein AE7 (157 aa).

Belongs to the MIP18 family. Part of a complex formed of AE7, CIA1, MMS19 and NAR1. Interacts with CIA1 and MMS19, but not with NAR1. In terms of tissue distribution, expressed in the embryo, shoot apical meristem, leaf primordia, inflorescence and all floral organs.

The protein resides in the nucleus. The protein localises to the cytoplasm. Its function is as follows. Central member of the cytosolic iron-sulfur (Fe-S) protein assembly (CIA) pathway. Involved in leaf polarity formation. Promotes leaf adaxial identity. May play a role in the cell cycle progression and is required for cell proliferation. In Arabidopsis thaliana (Mouse-ear cress), this protein is Protein AE7.